A 353-amino-acid chain; its full sequence is Photosystem II D2 protein (353 aa).

Thr2 is subject to N-acetylthreonine. Phosphothreonine is present on Thr2. The chain crosses the membrane as a helical span at residues Cys41–Thr61. A chlorophyll a-binding site is contributed by His118. A helical membrane pass occupies residues Gly125–Pro141. Gln130 and Asn143 together coordinate pheophytin a. A helical membrane pass occupies residues Val153–Ser166. His198 lines the chlorophyll a pocket. Residues Ala208 to Asp228 form a helical membrane-spanning segment. Residues His215 and Phe262 each contribute to the a plastoquinone site. His215 is a binding site for Fe cation. His269 serves as a coordination point for Fe cation. Residues Gly279 to Arg295 traverse the membrane as a helical segment.

This sequence belongs to the reaction center PufL/M/PsbA/D family. In terms of assembly, PSII is composed of 1 copy each of membrane proteins PsbA, PsbB, PsbC, PsbD, PsbE, PsbF, PsbH, PsbI, PsbJ, PsbK, PsbL, PsbM, PsbT, PsbX, PsbY, PsbZ, Psb30/Ycf12, at least 3 peripheral proteins of the oxygen-evolving complex and a large number of cofactors. It forms dimeric complexes. The D1/D2 heterodimer binds P680, chlorophylls that are the primary electron donor of PSII, and subsequent electron acceptors. It shares a non-heme iron and each subunit binds pheophytin, quinone, additional chlorophylls, carotenoids and lipids. There is also a Cl(-1) ion associated with D1 and D2, which is required for oxygen evolution. The PSII complex binds additional chlorophylls, carotenoids and specific lipids. is required as a cofactor.

It localises to the plastid. The protein localises to the chloroplast thylakoid membrane. The enzyme catalyses 2 a plastoquinone + 4 hnu + 2 H2O = 2 a plastoquinol + O2. Photosystem II (PSII) is a light-driven water:plastoquinone oxidoreductase that uses light energy to abstract electrons from H(2)O, generating O(2) and a proton gradient subsequently used for ATP formation. It consists of a core antenna complex that captures photons, and an electron transfer chain that converts photonic excitation into a charge separation. The D1/D2 (PsbA/PsbD) reaction center heterodimer binds P680, the primary electron donor of PSII as well as several subsequent electron acceptors. D2 is needed for assembly of a stable PSII complex. This Drimys granadensis protein is Photosystem II D2 protein.